The primary structure comprises 258 residues: MLAKRIIPCLDVRNGQVVKGVQFRNHEIIGDIVPLAQRYAQEGADELVFYDITASSDGRVVDKSWVSRVAEVIDIPFCVAGGIKSVEEAGQILSFGADKISINSPALADPELITRLADRYGVQCIVVGIDTWHDATTGRYHVNQYTGDEARTKVTTWETLDWVEEVQKRGAGEIVLNMMNQDGVRNGYDLHQLNLVRDVCNVPLIASGGAGTMEHFLDAFQTAHVDGALAASVFHKQIINIGELKQYLKQQGVEIRVC.

Catalysis depends on residues Asp11 and Asp130.

The protein belongs to the HisA/HisF family. In terms of assembly, heterodimer of HisH and HisF.

Its subcellular location is the cytoplasm. It catalyses the reaction 5-[(5-phospho-1-deoxy-D-ribulos-1-ylimino)methylamino]-1-(5-phospho-beta-D-ribosyl)imidazole-4-carboxamide + L-glutamine = D-erythro-1-(imidazol-4-yl)glycerol 3-phosphate + 5-amino-1-(5-phospho-beta-D-ribosyl)imidazole-4-carboxamide + L-glutamate + H(+). It functions in the pathway amino-acid biosynthesis; L-histidine biosynthesis; L-histidine from 5-phospho-alpha-D-ribose 1-diphosphate: step 5/9. Its function is as follows. IGPS catalyzes the conversion of PRFAR and glutamine to IGP, AICAR and glutamate. The HisF subunit catalyzes the cyclization activity that produces IGP and AICAR from PRFAR using the ammonia provided by the HisH subunit. This is Imidazole glycerol phosphate synthase subunit HisF from Pectobacterium carotovorum subsp. carotovorum (strain PC1).